The following is a 107-amino-acid chain: Ferredoxin 1 (107 aa).

4Fe-4S ferredoxin-type domains lie at 2–30 (TFVVTDNCIKCKYTDCVEVCPVDCFYEGP) and 31–60 (NFLVIHPDECIDCALCEPECPAQAIFSEDE). Residues Cys-9 and Cys-17 each contribute to the [3Fe-4S] cluster site. [4Fe-4S] cluster is bound by residues Cys-21, Cys-40, Cys-43, and Cys-46. Cys-50 is a [3Fe-4S] cluster binding site.

Requires [4Fe-4S] cluster as cofactor. The cofactor is [3Fe-4S] cluster.

In terms of biological role, ferredoxins are iron-sulfur proteins that transfer electrons in a wide variety of metabolic reactions. The polypeptide is Ferredoxin 1 (fdxA) (Pseudomonas putida (strain ATCC 47054 / DSM 6125 / CFBP 8728 / NCIMB 11950 / KT2440)).